The sequence spans 634 residues: MPDSLSLPLRPLIDKREHQDSLPVEIAQINAQWGAFRDVSEDSLRAQIEADKHKDPWAEDEESDGQSAADVDTSERLEQLYKRRAEITNFALQAHMEAMFALDFVSLLLSKYAPRQAETSMSAILKQVAPLGSLNAEVVNPPPKPESTAKDIKTVSRGWRLQNFDAAANRLLDAATRLESEVASETRYWEEVLAVKNKGWKVCRLPRERQALGVQYGFMEATPIFRDRGLAALRRADDGRLFLDKGLAPQRTRMLRVRVKHCGGISGCSKVQPAVTEDVESIENRILQARDTLYEEELFHEVFREARMLGNQGVITRQNLVQIPVSEEQDILLDLVDDQDLLSDETPMSHEHDTLANAISHSIHILLAYAHRQNLRRRTQPPPPLSTKRRHTPEYLLLRPVMAYLQHSSHVRWVESFLNDIHRVLQSAGLQCEFKATPFSSIRLPTKHTIPTVEALVQTFLAPLESTFSCKLPSSHGSFRVRVRTNAVVPPFGTHFDISVDMPEYPDIQPPSRIGLQEEVATALTHLTMLDILTAIRQDQKSAVEPSEDSKPTEQCLTWSAVYPHHGELVALSPTGPNKKIKVELSAQGLSVQSYTMRGEFTESIDEKASRAQSWKPDSTTPGSPGLMEFVRAV.

Disordered stretches follow at residues 51–73 (DKHK…DVDT) and 606–626 (DEKA…GSPG). Residues 611 to 623 (RAQSWKPDSTTPG) are compositionally biased toward polar residues.

Belongs to the Mediator complex subunit 17 family. Component of the Mediator complex.

Its subcellular location is the nucleus. Its function is as follows. Component of the Mediator complex, a coactivator involved in the regulated transcription of nearly all RNA polymerase II-dependent genes. Mediator functions as a bridge to convey information from gene-specific regulatory proteins to the basal RNA polymerase II transcription machinery. Mediator is recruited to promoters by direct interactions with regulatory proteins and serves as a scaffold for the assembly of a functional preinitiation complex with RNA polymerase II and the general transcription factors. The chain is Mediator of RNA polymerase II transcription subunit 17 (srb4) from Aspergillus terreus (strain NIH 2624 / FGSC A1156).